The primary structure comprises 96 residues: Cathelin (96 aa).

Pyrrolidone carboxylic acid is present on glutamine 1. Residues 31–50 (DQPPKADEDPGTPKPVSFTV) form a disordered region. 2 disulfides stabilise this stretch: cysteine 55-cysteine 66 and cysteine 73-cysteine 90.

It belongs to the cathelicidin family.

The protein localises to the secreted. Functionally, probably a microbicidal peptide. This chain is Cathelin, found in Sus scrofa (Pig).